A 469-amino-acid chain; its full sequence is Fe(3+)-Zn(2+) purple acid phosphatase 12 (469 aa).

A signal peptide spans 1–28 (MSSRSDLKIKRVSLIIFLLSVLVEFCYG). Asparagine 114 is a glycosylation site (N-linked (GlcNAc...) asparagine). Aspartate 168 contributes to the Fe cation binding site. Asparagine 176 carries an N-linked (GlcNAc...) asparagine glycan. Residues aspartate 197 and tyrosine 200 each coordinate Fe cation. Residue aspartate 197 coordinates Zn(2+). Asparagine 234 contributes to the Zn(2+) binding site. Asparagine 234 serves as a coordination point for substrate. A glycan (N-linked (GlcNAc...) asparagine) is linked at asparagine 307. Histidine 319 contacts Zn(2+). Histidine 329 serves as the catalytic Proton donor. A Zn(2+)-binding site is contributed by histidine 356. 356–358 (HVH) contributes to the substrate binding site. Histidine 358 serves as a coordination point for Fe cation. N-linked (GlcNAc...) asparagine glycosylation occurs at asparagine 429.

Belongs to the metallophosphoesterase superfamily. Purple acid phosphatase family. In terms of assembly, homodimer; disulfide-linked. The cofactor is Fe cation. It depends on Zn(2+) as a cofactor. Expressed in roots, stems, leaves, flowers and siliques.

It is found in the secreted. It carries out the reaction a phosphate monoester + H2O = an alcohol + phosphate. This is Fe(3+)-Zn(2+) purple acid phosphatase 12 (PAP12) from Arabidopsis thaliana (Mouse-ear cress).